The chain runs to 396 residues: 8-amino-7-oxononanoate synthase (396 aa).

Arginine 31 contacts substrate. 118-119 provides a ligand contact to pyridoxal 5'-phosphate; sequence GY. Residue histidine 143 participates in substrate binding. The pyridoxal 5'-phosphate site is built by serine 189, histidine 217, and threonine 245. The residue at position 248 (lysine 248) is an N6-(pyridoxal phosphate)lysine. Threonine 362 contacts substrate.

Belongs to the class-II pyridoxal-phosphate-dependent aminotransferase family. BioF subfamily. In terms of assembly, homodimer. Pyridoxal 5'-phosphate serves as cofactor.

The enzyme catalyses 6-carboxyhexanoyl-[ACP] + L-alanine + H(+) = (8S)-8-amino-7-oxononanoate + holo-[ACP] + CO2. The protein operates within cofactor biosynthesis; biotin biosynthesis. Its function is as follows. Catalyzes the decarboxylative condensation of pimeloyl-[acyl-carrier protein] and L-alanine to produce 8-amino-7-oxononanoate (AON), [acyl-carrier protein], and carbon dioxide. The polypeptide is 8-amino-7-oxononanoate synthase (Methylobacillus flagellatus (strain ATCC 51484 / DSM 6875 / VKM B-1610 / KT)).